Consider the following 312-residue polypeptide: Olfactory receptor 2J1 (312 aa).

The Extracellular portion of the chain corresponds to 1 to 26 (MLMKKNASFEDFFLLLGFSNWPHLEV). N-linked (GlcNAc...) asparagine glycosylation is present at Asn6. The chain crosses the membrane as a helical span at residues 27–50 (VLFVVILIFYLITLIGNLFIIILS). At 51–58 (YLDSHLHT) the chain is on the cytoplasmic side. Residues 59-80 (PMYFFLSNLSFLDLCYTTSSIP) form a helical membrane-spanning segment. Over 81-101 (QLLVNLWGPEKTISYAGCTVQ) the chain is Extracellular. A disulfide bridge links Cys98 with Cys190. A helical transmembrane segment spans residues 102–121 (LYFVLALGTAECVLLVVMSY). Topologically, residues 122–140 (DRYAAVCRPLHYTVLMHPR) are cytoplasmic. The chain crosses the membrane as a helical span at residues 141–159 (FCRLLAAASWVSGFTTSAL). Over 160 to 196 (HSSFTFWIPLCRHRLVDHFFCEVPALLRLSCVDTQAN) the chain is Extracellular. The chain crosses the membrane as a helical span at residues 197–220 (ELTLMVMSSIFVLIPLILILTSYG). Residues 221 to 237 (AIARAVLSMQSTTGLQK) are Cytoplasmic-facing. A helical transmembrane segment spans residues 238–260 (VLRTCGAHLMVVSLFFIPVMCMY). The Extracellular segment spans residues 261–273 (LQPPSENSQDQGK). Residues 274–293 (FIALFYTVVTPSLNPLIYTF) traverse the membrane as a helical segment. Over 294 to 312 (RNKDVRGAVKRLMGWEWGM) the chain is Cytoplasmic.

The protein belongs to the G-protein coupled receptor 1 family.

It is found in the cell membrane. Functionally, odorant receptor. The chain is Olfactory receptor 2J1 (OR2J1) from Homo sapiens (Human).